The chain runs to 321 residues: Geranylgeranyl transferase type-2 subunit beta 1 (321 aa).

Residue Ser2 is modified to N-acetylserine. 6 PFTB repeats span residues 14–55 (ADKH…DLLD), 62–103 (EEEV…ALFD), 110–151 (IGKV…SILK), 158–199 (VEKA…AITG), 206–247 (KDSL…IMID), and 254–296 (KAKL…SLLE). Geranylgeranyl diphosphate contacts are provided by residues 184–186 (HAG) and 226–229 (RPEK). Zn(2+) contacts are provided by Asp232 and Cys234. A geranylgeranyl diphosphate-binding site is contributed by 235 to 238 (YSWW). Zn(2+) is bound at residue His284.

The protein belongs to the protein prenyltransferase subunit beta family. As to quaternary structure, heterotrimer composed of the alpha subunit RGTA, the beta subunit RGTB and REP; within this trimer, RGTA and RGTB form the catalytic component, while REP mediates peptide substrate binding. It depends on Zn(2+) as a cofactor. Mg(2+) serves as cofactor.

It catalyses the reaction geranylgeranyl diphosphate + L-cysteinyl-[protein] = S-geranylgeranyl-L-cysteinyl-[protein] + diphosphate. Its activity is regulated as follows. The enzymatic reaction requires the aid of the Rab escort protein REP. In terms of biological role, catalyzes the transfer of a geranylgeranyl moiety from geranylgeranyl diphosphate to both cysteines of Rab proteins with the C-terminal sequence -CCXX, CXXX, -XCCX and -XCXC, such as RABA1A, RABA2A, RABF2A and RABG2. Involved in the geranylgeranylation of RABA2A. In vitro, can prenylate PGGTI targets with the C-terminal sequence Cys-aliphatic-aliphatic-X (CaaX) with leucine in the terminal position. Substrates with the C-terminal sequence -CSIL such as ARAC11/ROP1 or GG2/AGG2 are prenylated independently of REP and when the beta subunit is associated with the alpha subunit RGTA1. Its function is as follows. Required for male fertility and root tip growth. The chain is Geranylgeranyl transferase type-2 subunit beta 1 from Arabidopsis thaliana (Mouse-ear cress).